A 351-amino-acid chain; its full sequence is Probable sugar phosphate/phosphate translocator At5g11230 (351 aa).

10 helical membrane-spanning segments follow: residues 15–35, 49–69, 89–109, 113–133, 141–161, 165–185, 205–225, 236–256, 263–283, and 286–306; these read IVLS…VIVY, FPIS…FLII, VVPI…AYIY, SFIQ…GVLF, DTMM…YGEA, VWGV…LVLI, VAPC…FPVL, AIFG…FLLV, TMNV…WSVI, and TVTP…AYYN. Residues 38 to 156 form the EamA domain; it reads YILDKKMYNW…LSISFGVAIA (119 aa). Residues 321–351 form a disordered region; that stretch reads KKIQQADEESGRLLEEREGDVEGKKNDQSGN.

It belongs to the TPT transporter family. TPT (TC 2.A.7.9) subfamily.

The protein resides in the membrane. The protein is Probable sugar phosphate/phosphate translocator At5g11230 of Arabidopsis thaliana (Mouse-ear cress).